A 98-amino-acid polypeptide reads, in one-letter code: NADH-ubiquinone oxidoreductase chain 4L (98 aa).

Transmembrane regions (helical) follow at residues 1-21, 26-46, and 59-79; these read MTPT…GLAF, LLSA…ALSL, and APML…ALLV.

Belongs to the complex I subunit 4L family.

It is found in the mitochondrion membrane. It carries out the reaction a ubiquinone + NADH + 5 H(+)(in) = a ubiquinol + NAD(+) + 4 H(+)(out). Core subunit of the mitochondrial membrane respiratory chain NADH dehydrogenase (Complex I) which catalyzes electron transfer from NADH through the respiratory chain, using ubiquinone as an electron acceptor. Part of the enzyme membrane arm which is embedded in the lipid bilayer and involved in proton translocation. The protein is NADH-ubiquinone oxidoreductase chain 4L (MT-ND4L) of Gadus morhua (Atlantic cod).